A 353-amino-acid chain; its full sequence is Inositol 3-kinase (353 aa).

ATP contacts are provided by residues Ser197, 247-250 (GAGD), and Asn274. Asp250 serves as the catalytic Proton acceptor.

This sequence belongs to the carbohydrate kinase pfkB family.

It catalyses the reaction myo-inositol + ATP = 1D-myo-inositol 3-phosphate + ADP + H(+). Kinase that phosphorylates myo-inositol to produce multiple myo-inositol monophosphates. Participates in phytic acid biosynthesis in developing seeds. Phytic acid is the primary storage form of phosphorus in cereal grains and other plant seeds. In Arabidopsis thaliana (Mouse-ear cress), this protein is Inositol 3-kinase.